The primary structure comprises 115 residues: Promotilin (115 aa).

Residues 1 to 25 (MLSRKATAILLVVHAAAMLASQTEG) form the signal peptide. The segment at 43–73 (RYKGQKKSLSVQQRSEEVGPVDPAEPREEKQ) is disordered.

The protein belongs to the motilin family.

The protein localises to the secreted. Plays an important role in the regulation of interdigestive gastrointestinal motility and indirectly causes rhythmic contraction of duodenal and colonic smooth muscle. This chain is Promotilin (MLN), found in Ovis aries (Sheep).